Consider the following 189-residue polypeptide: Interleukin-23 subunit alpha (189 aa).

A signal peptide spans 1–19; the sequence is MLGSRAVMLLLLLPWTAQG. Cys77 and Cys89 are disulfide-bonded.

It belongs to the IL-6 superfamily. Heterodimer with IL12B; disulfide-linked. The heterodimer is known as interleukin IL-23. Interacts with IL23R; this interaction enables recruitment of IL12RB1. In terms of tissue distribution, secreted by activated dendritic and phagocytic cells and keratinocytes. Also expressed by dermal Langerhans cells (at protein level).

The protein resides in the secreted. Associates with IL12B to form the pro-inflammatory cytokine IL-23 that plays different roles in innate and adaptive immunity. Released by antigen-presenting cells such as dendritic cells or macrophages, binds to a heterodimeric receptor complex composed of IL12RB1 and IL23R to activate JAK2 and TYK2 which then phosphorylate the receptor to form a docking site leading to the phosphorylation of STAT3 and STAT4. This process leads to activation of several pathways including p38 MAPK or NF-kappa-B and promotes the production of pro-inflammatory cytokines such as interleukin-17A/IL17A. In turn, participates in the early and effective intracellular bacterial clearance. Promotes the expansion and survival of T-helper 17 cells, a CD4-positive helper T-cell subset that produces IL-17, as well as other IL-17-producing cells. The chain is Interleukin-23 subunit alpha (IL23A) from Homo sapiens (Human).